Consider the following 524-residue polypeptide: Adhesion G-protein coupled receptor G5 (524 aa).

A signal peptide spans methionine 1–threonine 23. At leucine 24 to tyrosine 246 the chain is on the extracellular side. N-linked (GlcNAc...) asparagine glycosylation is found at asparagine 58, asparagine 65, asparagine 96, asparagine 143, asparagine 169, and asparagine 175. One can recognise a GAIN-B domain in the interval glutamine 74–proline 235. 2 disulfide bridges follow: cysteine 185–cysteine 217 and cysteine 205–cysteine 219. The GPS stretch occupies residues cysteine 185 to proline 235. A stachel region spans residues tyrosine 224–serine 232. The chain crosses the membrane as a helical span at residues isoleucine 247–alanine 267. Residues glutamine 268–asparagine 284 are Cytoplasmic-facing. Residues glycine 285–methionine 305 traverse the membrane as a helical segment. Topologically, residues proline 306–tyrosine 319 are extracellular. Cysteines 310 and 400 form a disulfide. The helical transmembrane segment at alanine 320–glycine 340 threads the bilayer. Over arginine 341–leucine 351 the chain is Cytoplasmic. The chain crosses the membrane as a helical span at residues leucine 352–isoleucine 372. Residues lysine 373–methionine 413 lie on the Extracellular side of the membrane. Residues asparagine 390 and asparagine 396 are each glycosylated (N-linked (GlcNAc...) asparagine). The helical transmembrane segment at glycine 414–leucine 434 threads the bilayer. Residues cysteine 435–alanine 453 are Cytoplasmic-facing. The helical transmembrane segment at methionine 454–phenylalanine 476 threads the bilayer. Residues leucine 477–glutamine 480 lie on the Extracellular side of the membrane. Residues leucine 481–cysteine 500 form a helical membrane-spanning segment. Residues serine 501 to histidine 524 are Cytoplasmic-facing.

The protein belongs to the G-protein coupled receptor 2 family. Adhesion G-protein coupled receptor (ADGR) subfamily. Heterodimer of 2 chains generated by proteolytic processing; the large extracellular N-terminal fragment and the membrane-bound C-terminal fragment predominantly remain associated and non-covalently linked. In terms of processing, autoproteolytically processed at the GPS region of the GAIN-B domain; this cleavage modulates receptor activity. As to expression, expressed at least in kidney, heart, brain and spleen. Isoform 1 is predominant in spleen. In the kidney, both isoform 1 and isoform 2 are expressed at similar levels. In terms of tissue distribution, isoform 2 is the major form in heart and brain. In the kidney, both isoform 1 and isoform 2 are expressed at similar levels.

Its subcellular location is the cell membrane. Its activity is regulated as follows. Forms a heterodimer of 2 chains generated by proteolytic processing that remain associated through non-covalent interactions mediated by the GAIN-B domain. In the inactivated receptor, the Stachel sequence (also named stalk) is embedded in the GAIN-B domain, where it adopts a beta-strand conformation. On activation, the Stachel moves into the 7 transmembrane region and adopts a twisted hook-shaped configuration that forms contacts within the receptor, leading to coupling of a G-alpha protein, which activates signaling. The cleaved GAIN-B and N-terminal domains can then dissociate from the rest of the receptor. Functionally, orphan adhesion G-protein coupled receptor (aGPCR). Ligand binding causes a conformation change that triggers signaling via guanine nucleotide-binding proteins (G proteins) and modulates the activity of downstream effectors, such as adenylate cyclase. ADGRG5 is specifically coupled to G(s) G proteins and mediates activation of adenylate cyclase activity. In terms of biological role, isoform 1, but not isoform 2, is constitutively active, as evidenced by elevated basal cAMP levels, and responds to mechanical activation (shaking). The sequence is that of Adhesion G-protein coupled receptor G5 from Mus musculus (Mouse).